A 147-amino-acid polypeptide reads, in one-letter code: Ponticulin-like protein C4 (147 aa).

Positions 1-20 are cleaved as a signal peptide; the sequence is MKFTKSLLLLIVAVFASSNA. The GPI-like-anchor amidated asparagine moiety is linked to residue Asn118. The N-linked (GlcNAc...) asparagine glycan is linked to Asn118. A propeptide spans 119–147 (removed in mature form); the sequence is SSESDSSDSTRIGASFALAAAALLSMIAL.

It belongs to the ponticulin family. The GPI-like-anchor contains a phosphoceramide group, rather than a phosphatidyl group.

It localises to the cell membrane. The sequence is that of Ponticulin-like protein C4 (ponC4) from Dictyostelium discoideum (Social amoeba).